A 406-amino-acid chain; its full sequence is Acetylornithine/succinyldiaminopimelate aminotransferase (406 aa).

Pyridoxal 5'-phosphate-binding positions include 108-109 (GT) and F141. R144 serves as a coordination point for N(2)-acetyl-L-ornithine. 226–229 (DEVQ) contributes to the pyridoxal 5'-phosphate binding site. K255 carries the N6-(pyridoxal phosphate)lysine modification. N(2)-acetyl-L-ornithine is bound at residue S283. T284 contributes to the pyridoxal 5'-phosphate binding site.

It belongs to the class-III pyridoxal-phosphate-dependent aminotransferase family. ArgD subfamily. Homodimer. Requires pyridoxal 5'-phosphate as cofactor.

The protein localises to the cytoplasm. It carries out the reaction N(2)-acetyl-L-ornithine + 2-oxoglutarate = N-acetyl-L-glutamate 5-semialdehyde + L-glutamate. The catalysed reaction is N-succinyl-(2S,6S)-2,6-diaminopimelate + 2-oxoglutarate = (S)-2-succinylamino-6-oxoheptanedioate + L-glutamate. It functions in the pathway amino-acid biosynthesis; L-arginine biosynthesis; N(2)-acetyl-L-ornithine from L-glutamate: step 4/4. It participates in amino-acid biosynthesis; L-lysine biosynthesis via DAP pathway; LL-2,6-diaminopimelate from (S)-tetrahydrodipicolinate (succinylase route): step 2/3. Involved in both the arginine and lysine biosynthetic pathways. The protein is Acetylornithine/succinyldiaminopimelate aminotransferase of Escherichia coli O6:H1 (strain CFT073 / ATCC 700928 / UPEC).